The primary structure comprises 241 residues: Pyridoxine 5'-phosphate synthase (241 aa).

A 3-amino-2-oxopropyl phosphate-binding site is contributed by N7. 9-10 is a binding site for 1-deoxy-D-xylulose 5-phosphate; the sequence is DH. R18 provides a ligand contact to 3-amino-2-oxopropyl phosphate. H43 serves as the catalytic Proton acceptor. 1-deoxy-D-xylulose 5-phosphate-binding residues include R45 and H50. E70 functions as the Proton acceptor in the catalytic mechanism. T100 serves as a coordination point for 1-deoxy-D-xylulose 5-phosphate. H191 acts as the Proton donor in catalysis. Residues G192 and 213 to 214 each bind 3-amino-2-oxopropyl phosphate; that span reads GH.

Belongs to the PNP synthase family. As to quaternary structure, homooctamer; tetramer of dimers.

Its subcellular location is the cytoplasm. It catalyses the reaction 3-amino-2-oxopropyl phosphate + 1-deoxy-D-xylulose 5-phosphate = pyridoxine 5'-phosphate + phosphate + 2 H2O + H(+). Its pathway is cofactor biosynthesis; pyridoxine 5'-phosphate biosynthesis; pyridoxine 5'-phosphate from D-erythrose 4-phosphate: step 5/5. In terms of biological role, catalyzes the complicated ring closure reaction between the two acyclic compounds 1-deoxy-D-xylulose-5-phosphate (DXP) and 3-amino-2-oxopropyl phosphate (1-amino-acetone-3-phosphate or AAP) to form pyridoxine 5'-phosphate (PNP) and inorganic phosphate. In Solidesulfovibrio magneticus (strain ATCC 700980 / DSM 13731 / RS-1) (Desulfovibrio magneticus), this protein is Pyridoxine 5'-phosphate synthase.